Reading from the N-terminus, the 941-residue chain is Protein BREAST CANCER SUSCEPTIBILITY 1 homolog (941 aa).

An RING-type zinc finger spans residues 16-54 (CPICLSLYNSAVSLSCNHVFCNACIVKSMKMDATCPVCK). 2 disordered regions span residues 87–282 (FVSQ…ILPS) and 303–528 (KVKV…GKDD). 2 stretches are compositionally biased toward basic and acidic residues: residues 96 to 115 (SDKE…DKNR) and 125 to 136 (KRNEYGKTKEID). A compositionally biased stretch (polar residues) spans 157-173 (LLQNLSAESLTKPTESV). Residues 175–196 (TAEKPKDYTENTVIRLDEHPSL) are compositionally biased toward basic and acidic residues. Residues 216–236 (NSSQRTESDQLLGTTPVNVPS) show a composition bias toward polar residues. Positions 242–255 (DSDHESPSKEDEQQ) are enriched in basic and acidic residues. A Nuclear localization signal 1 motif is present at residues 298 to 305 (QKKLPKVK). Composition is skewed to polar residues over residues 329–357 (GVSQ…SGTI) and 376–391 (SKAQ…NVSN). Basic and acidic residues-rich tracts occupy residues 428 to 453 (GKGD…EKPS) and 477 to 487 (KTSEKKLKLDS). The short motif at 444-451 (EKRSPTEK) is the Nuclear localization signal 2 element. The span at 489-498 (MISSKATQPH) shows a compositional bias: polar residues. A compositionally biased stretch (basic and acidic residues) spans 512–528 (DKQDSRNNRKSTVGKDD). A C2HC pre-PHD-type zinc finger spans residues 561-612 (KFTCAFCQCSEDTEASGEMTHYYRGEPVSADFNGGSKVIHVHKNCAEWAPNV). The segment at 632–681 (ISCSCCGLKGAALGCYNKSCKNSFHVTCAKLIPECRWDNVKFVMLCPLDA) adopts a PHD-type; degenerate zinc-finger fold. BRCT domains lie at 724 to 819 (KQFH…PYEI) and 840 to 941 (KKPK…LVLI).

In terms of assembly, forms heterodimer with BARD1/ROW1. In terms of tissue distribution, expressed ubiquitously with highest levels in flower buds. Mostly expressed in flowers and siliques, and, to a lower extent, in roots, rosette leaves, inflorescence and young cauline leaves.

It is found in the nucleus. Plays a role in DNA repair and in cell-cycle control. Required for the repair of DNA double-strand breaks (DSBs), both natural and induced by genotoxic stress, by homologous recombination (HR). The polypeptide is Protein BREAST CANCER SUSCEPTIBILITY 1 homolog (Arabidopsis thaliana (Mouse-ear cress)).